The chain runs to 232 residues: uncharacterized protein (232 aa).

2 disordered regions span residues 123-147 and 169-200; these read VAGGKHSSNRRPRGTIRAVPGRKYP and AAADPQERVGPRGRRGLAGQQQCRGRPGPSLR.

The protein belongs to the mycobacterial PPE family.

This is an uncharacterized protein from Mycobacterium tuberculosis (strain ATCC 25618 / H37Rv).